Here is a 75-residue protein sequence, read N- to C-terminus: Large ribosomal subunit protein bL31 (75 aa).

As to quaternary structure, part of the 50S ribosomal subunit.

Functionally, binds the 23S rRNA. The chain is Large ribosomal subunit protein bL31 from Rhodopseudomonas palustris (strain ATCC BAA-98 / CGA009).